The chain runs to 68 residues: Tabimmunregulin 12 (68 aa).

Residues 1 to 24 (MLFKSYVYFLAGLLLVGLFTSCDA) form the signal peptide. The propeptide occupies 25–38 (DAQYEELVPGFFRK).

In terms of tissue distribution, expressed in salivary glands.

Its subcellular location is the secreted. Horsefly salivary gland immunosuppressant protein that likely inhibits the host inflammatory response by regulation of anti- and pro-inflammatory cytokines. When tested on mouse splenocytes in the presence of LPS, it increases the secretion of the proinflammatory cytokine interleukin-10 (IL10) and decreases the secretion of the proinflammatory cytokine interferon-gamma (IFNG) in a dose-dependent manner. This chain is Tabimmunregulin 12, found in Tabanus yao (Horsefly).